The following is a 601-amino-acid chain: Elongation factor 4 (601 aa).

In terms of domain architecture, tr-type G spans 6–188; that stretch reads SRTRNFSIIA…DIVKNVPPPK (183 aa). GTP contacts are provided by residues 18–23 and 135–138; these read DHGKST and NKID.

The protein belongs to the TRAFAC class translation factor GTPase superfamily. Classic translation factor GTPase family. LepA subfamily.

It localises to the cell membrane. The enzyme catalyses GTP + H2O = GDP + phosphate + H(+). Its function is as follows. Required for accurate and efficient protein synthesis under certain stress conditions. May act as a fidelity factor of the translation reaction, by catalyzing a one-codon backward translocation of tRNAs on improperly translocated ribosomes. Back-translocation proceeds from a post-translocation (POST) complex to a pre-translocation (PRE) complex, thus giving elongation factor G a second chance to translocate the tRNAs correctly. Binds to ribosomes in a GTP-dependent manner. This chain is Elongation factor 4, found in Clostridioides difficile (strain 630) (Peptoclostridium difficile).